A 240-amino-acid polypeptide reads, in one-letter code: MILLISDLHLQEERPDITRAFLDLLDGRARHAKALYILGDFFEAWIGDDAMTPFQQSICQAVRQLSDSGTAVYLMHGNRDFLIGEGFCKAAGCTLLADPSVISLGGEQVLLMHGDTLCTRDIGYMKMRRYLRNPLSLWILRHLPLATRQKLARKLRSESRAQTRMKATEIVDVTPEEVPAVMAAHGVKTLVHGHTHRPAIHKLVVNGEPARRIVLGDWDRRGWTLQVDAQGFQLEPFEFS.

Residues aspartate 7, histidine 9, aspartate 40, asparagine 78, and histidine 113 each contribute to the Mn(2+) site. 78 to 79 is a substrate binding site; sequence NR. Aspartate 121, serine 159, threonine 163, lysine 166, and histidine 194 together coordinate substrate. Positions 194 and 196 each coordinate Mn(2+).

Belongs to the LpxH family. The cofactor is Mn(2+).

It is found in the cell inner membrane. The catalysed reaction is UDP-2-N,3-O-bis[(3R)-3-hydroxytetradecanoyl]-alpha-D-glucosamine + H2O = 2-N,3-O-bis[(3R)-3-hydroxytetradecanoyl]-alpha-D-glucosaminyl 1-phosphate + UMP + 2 H(+). It functions in the pathway glycolipid biosynthesis; lipid IV(A) biosynthesis; lipid IV(A) from (3R)-3-hydroxytetradecanoyl-[acyl-carrier-protein] and UDP-N-acetyl-alpha-D-glucosamine: step 4/6. Hydrolyzes the pyrophosphate bond of UDP-2,3-diacylglucosamine to yield 2,3-diacylglucosamine 1-phosphate (lipid X) and UMP by catalyzing the attack of water at the alpha-P atom. Involved in the biosynthesis of lipid A, a phosphorylated glycolipid that anchors the lipopolysaccharide to the outer membrane of the cell. The chain is UDP-2,3-diacylglucosamine hydrolase from Pseudomonas putida (strain W619).